The chain runs to 804 residues: Probable basic-leucine zipper transcription factor C (804 aa).

Disordered regions lie at residues 86–148 and 275–371; these read FISP…NDIN and YGNV…PKKR. Low complexity predominate over residues 90–145; that stretch reads NNNNNNNNNNNNNNNNNNNNNNNNNNNNNNNNNNNNNNNNNNNNNNNNNNNNNNNN. Positions 275 to 291 are enriched in polar residues; it reads YGNVSDNSSPETNFSYA. The segment covering 292–334 has biased composition (low complexity); the sequence is SPSSPSSTQSQSSPYEQQPLSPNPTISLSSSISVTATTTTRPN. Positions 335–356 are enriched in basic and acidic residues; sequence ATEKTKESSLKSKSKSNEKDKE. Positions 415–478 constitute a bZIP domain; sequence ALNYQFRKIK…DQYKLQEKQK (64 aa). The tract at residues 421–436 is basic motif; that stretch reads RKIKNRESARRSRERK. The segment at 443 to 450 is leucine-zipper; that stretch reads LEAKIAEI. The disordered stretch occupies residues 670–693; sequence KNCNNNNENNNNNDNNKNSDDEKG. The segment covering 672–685 has biased composition (low complexity); that stretch reads CNNNNENNNNNDNN.

This sequence belongs to the bZIP family.

It localises to the nucleus. In terms of biological role, probable transcriptional regulator. The chain is Probable basic-leucine zipper transcription factor C (bzpC) from Dictyostelium discoideum (Social amoeba).